Here is a 209-residue protein sequence, read N- to C-terminus: TVP38/TMEM64 family membrane protein slr0305 (209 aa).

The next 5 helical transmembrane spans lie at 15–35, 39–59, 110–130, 134–154, and 171–191; these read LGTW…VVFL, ILTL…YVFI, LSPV…NVSL, VIGS…GSLA, and LQWT…IYVT.

It belongs to the TVP38/TMEM64 family.

The protein resides in the cell membrane. The sequence is that of TVP38/TMEM64 family membrane protein slr0305 from Synechocystis sp. (strain ATCC 27184 / PCC 6803 / Kazusa).